Reading from the N-terminus, the 101-residue chain is 2-amino-4-ketopentanoate thiolase alpha subunit (101 aa).

It belongs to the OrtA family. As to quaternary structure, heterodimer with OrtB.

It catalyses the reaction D-alanine + acetyl-CoA = (2R)-2-amino-4-oxopentanoate + CoA. With respect to regulation, completely inhibited by p-chloromercuribenzoate (p-ClHgBzO) and acetyl-CoA, and partially inhibited by N-ethylmaleimide. Involved in the ornithine fermentation pathway. Catalyzes the thiolytic cleavage of 2-amino-4-ketopentanoate (AKP) with coenzyme A (CoA) to form acetyl-CoA and alanine. It is strictly specific for AKP. The sequence is that of 2-amino-4-ketopentanoate thiolase alpha subunit from Acetoanaerobium sticklandii (strain ATCC 12662 / DSM 519 / JCM 1433 / CCUG 9281 / NCIMB 10654 / HF) (Clostridium sticklandii).